We begin with the raw amino-acid sequence, 970 residues long: GEM-interacting protein (970 aa).

Phosphoserine is present on Ser-19. 3 disordered regions span residues 44 to 76, 224 to 263, and 377 to 478; these read PLLS…EGPV, SEDL…AQAK, and PLDI…ENGL. A compositionally biased stretch (polar residues) spans 56–65; sequence PTATVTNEAS. 6 positions are modified to phosphoserine: Ser-71, Ser-231, Ser-234, Ser-243, Ser-437, and Ser-441. Residues 81 to 344 form the F-BAR domain; sequence EELDLRLIRT…CCAPFEPGQR (264 aa). Over residues 231–246 the composition is skewed to polar residues; that stretch reads SQGSPEDSAPQASPGP. A compositionally biased stretch (acidic residues) spans 459–472; it reads SSDDFEERDPDLGD. The segment at 493–537 adopts a Phorbol-ester/DAG-type zinc-finger fold; the sequence is THQLRRLRGPAKCRECEAFMVSGTECEECFLTCHKRCLETLLILC. Residues 554–757 form the Rho-GAP domain; that stretch reads LQLPRDFPEE…FLIVHYEQIF (204 aa). Phosphothreonine is present on Thr-660. Residues 762–878 are disordered; that stretch reads LPQATEPPPQ…PVKYPRGGVR (117 aa). Residues 766-778 show a composition bias toward pro residues; sequence TEPPPQDSSPAPG. A compositionally biased stretch (polar residues) spans 815-830; that stretch reads EQHPTATPTEIPTPQS. The span at 831 to 844 shows a compositional bias: basic and acidic residues; it reads DQREDVAEDTKDGG. Residues 847–863 show a composition bias toward polar residues; it reads VSSQGPEDSLLGTQSRG. Ser-885, Ser-907, Ser-914, Ser-919, and Ser-923 each carry phosphoserine. Residues 897 to 932 form a disordered region; that stretch reads ETPITSVPRGSLRGRGPSPAAASPEGSPLRRTPLPK. The span at 910-923 shows a compositional bias: low complexity; that stretch reads GRGPSPAAASPEGS.

As to quaternary structure, interacts with GEM through its N-terminal.

In terms of biological role, stimulates, in vitro and in vivo, the GTPase activity of RhoA. The protein is GEM-interacting protein (GMIP) of Homo sapiens (Human).